The primary structure comprises 378 residues: Histidinol-phosphate aminotransferase 2 (378 aa).

At lysine 240 the chain carries N6-(pyridoxal phosphate)lysine.

Belongs to the class-II pyridoxal-phosphate-dependent aminotransferase family. Histidinol-phosphate aminotransferase subfamily. In terms of assembly, homodimer. Pyridoxal 5'-phosphate serves as cofactor.

It catalyses the reaction L-histidinol phosphate + 2-oxoglutarate = 3-(imidazol-4-yl)-2-oxopropyl phosphate + L-glutamate. Its pathway is amino-acid biosynthesis; L-histidine biosynthesis; L-histidine from 5-phospho-alpha-D-ribose 1-diphosphate: step 7/9. In Caulobacter vibrioides (strain ATCC 19089 / CIP 103742 / CB 15) (Caulobacter crescentus), this protein is Histidinol-phosphate aminotransferase 2 (hisC2).